A 138-amino-acid polypeptide reads, in one-letter code: MSTTGKGGKAKGKTASSKQVSRSARAGLQFPVGRISRFLKHGRYSERIGTGAPVYLAAVLEYLAAEVLELAGNAAKDNKKTRIVPRHILLAIRNDEELNKLMANTTIADGGVLPNINPMLLPSKSKKTESRGQASQDI.

A disordered region spans residues 1–23 (MSTTGKGGKAKGKTASSKQVSRS). Ser2 is subject to N-acetylserine. An N6-acetyllysine mark is found at Lys6, Lys9, Lys11, Lys13, and Lys18. A Phosphoserine modification is found at Ser123. Lys124 is covalently cross-linked (Glycyl lysine isopeptide (Lys-Gly) (interchain with G-Cter in ubiquitin)). A phosphoserine mark is found at Ser125, Ser130, and Ser135. Positions 135 to 136 (SQ) match the [ST]-Q motif motif.

It belongs to the histone H2A family. In terms of assembly, the nucleosome is a histone octamer containing two molecules each of H2A, H2B, H3 and H4 assembled in one H3-H4 heterotetramer and two H2A-H2B heterodimers. The octamer wraps approximately 147 bp of DNA. In terms of processing, monoubiquitination of Lys-124 gives a specific tag for epigenetic transcriptional repression. Post-translationally, acetylation occurs almost exclusively in the MAC.

The protein resides in the nucleus. The protein localises to the chromosome. Its function is as follows. Core component of nucleosome. Nucleosomes wrap and compact DNA into chromatin, limiting DNA accessibility to the cellular machineries which require DNA as a template. Histones thereby play a central role in transcription regulation, DNA repair, DNA replication and chromosomal stability. DNA accessibility is regulated via a complex set of post-translational modifications of histones, also called histone code, and nucleosome remodeling. The protein is Histone H2AX (HTA1) of Tetrahymena pyriformis.